Consider the following 1437-residue polypeptide: Myomesin-3 (1437 aa).

A disordered region spans residues 1-49; the sequence is MTLPHSLGGAGDPRPPQAMEVHRLEHRQEEEQKEERQHSLRMGSSVRRR. Basic and acidic residues predominate over residues 20–38; it reads EVHRLEHRQEEEQKEERQH. Positions 120-149 form a coiled coil; that stretch reads RLLRQRRDWKTLRRRTEEKVQEAKELRELC. Ig-like C2-type domains are found at residues 154-246 and 269-361; these read PWFW…AKVL and PSVE…TYVL. 5 consecutive Fibronectin type-III domains span residues 375–469, 503–598, 604–696, 702–797, and 804–899; these read SPLN…VMGD, PPTN…LRGP, PPAQ…VKQA, APYG…CKEW, and PPYD…LEDK. Ig-like C2-type domains lie at 1120-1205 and 1334-1423; these read PYFE…LDLT and AKVV…VTIS.

Homodimer.

Its subcellular location is the cytoplasm. The protein resides in the myofibril. It is found in the sarcomere. The protein localises to the m line. May link the intermediate filament cytoskeleton to the M-disk of the myofibrils in striated muscle. In Homo sapiens (Human), this protein is Myomesin-3 (MYOM3).